Consider the following 180-residue polypeptide: uncharacterized protein (180 aa).

Transmembrane regions (helical) follow at residues K4–F24, I25–I45, N57–Y77, F81–F101, F124–L144, and I156–F176.

Its subcellular location is the cell membrane. This is an uncharacterized protein from Methanocaldococcus jannaschii (strain ATCC 43067 / DSM 2661 / JAL-1 / JCM 10045 / NBRC 100440) (Methanococcus jannaschii).